A 358-amino-acid chain; its full sequence is Membrane-bound lytic murein transglycosylase C (358 aa).

A signal peptide spans 1–19 (MKITLKKLLILAIVPFLYA). A lipid anchor (N-palmitoyl cysteine) is attached at cysteine 20. Cysteine 20 carries S-diacylglycerol cysteine lipidation.

Belongs to the transglycosylase Slt family.

Its subcellular location is the cell outer membrane. The catalysed reaction is Exolytic cleavage of the (1-&gt;4)-beta-glycosidic linkage between N-acetylmuramic acid (MurNAc) and N-acetylglucosamine (GlcNAc) residues in peptidoglycan, from either the reducing or the non-reducing ends of the peptidoglycan chains, with concomitant formation of a 1,6-anhydrobond in the MurNAc residue.. Functionally, murein-degrading enzyme. May play a role in recycling of muropeptides during cell elongation and/or cell division. The protein is Membrane-bound lytic murein transglycosylase C of Actinobacillus succinogenes (strain ATCC 55618 / DSM 22257 / CCUG 43843 / 130Z).